The chain runs to 735 residues: MEPAQKKLRQESKNPYLAHLNNGDDSEEVVSSKGLTRRATTVAQAAKAEEGPNNFFNDKPFSQNYFKILETRRELPVYQQREEFLKIYHENQIIVFVGETGSGKTTQIPQFVLYDELPHLTNTQIACTQPRRVAAMSVAKRVADEMDVDLGEEVGYNIRFEDCSGPNTLLKYMTDGMLLREAMTDHMLSRYSCIILDEAHERTLATDILMGLMKRLATRRPDLKIIVMSATLDAKKFQKYFFDAPLLAVPGRTYPVEIYYTQEPERDYLEAALRTVLQIHVEEGPGDILVFLTGEEEIEDACRKITLEADDLVREGAAGPLKVYPLYGSLPPNQQQRIFEPTPEDTKSGYGRKVVISTNIAETSLTIDGIVYVVDPGFSKQKIYNPRIRVESLLVSPISKASAQQRAGRAGRTRPGKCFRLYTEEAFRKELIEQTYPEILRSNLSSTVLELKKLGIDDLVHFDYMDPPAPETMMRALEELNYLNCLDDNGDLTPLGRKASEFPLDPNLAVMLIRSPEFYCSNEVLSLTALLSVPNVFVRPNSARKLADEMRQQFTHPDGDHLTLLNVYHAYKSGEGTADWCWNHFLSHRALISADNVRKQLRRTMERQEVELISTPFDDKNYYVNIRRALVSGFFMQVAKKSANGKNYVTMKDNQVVSLHPSCGLSVTPEWVVYNEFVLTTKSFIRNVTAIRPEWLIELAPNYYDLDDFDNNKEVKSALQKVYQMAARSKKNARR.

Residues 1–12 (MEPAQKKLRQES) show a composition bias toward basic and acidic residues. A disordered region spans residues 1-34 (MEPAQKKLRQESKNPYLAHLNNGDDSEEVVSSKG). The region spanning 85–250 (LKIYHENQII…FFDAPLLAVP (166 aa)) is the Helicase ATP-binding domain. Position 98–105 (98–105 (GETGSGKT)) interacts with ATP. The short motif at 197–200 (DEAH) is the DEAH box element. Residues 275–455 (TVLQIHVEEG…STVLELKKLG (181 aa)) enclose the Helicase C-terminal domain.

This sequence belongs to the DEAD box helicase family. DEAH subfamily. DDX15/PRP43 sub-subfamily.

It localises to the nucleus. The catalysed reaction is ATP + H2O = ADP + phosphate + H(+). Functionally, pre-mRNA processing factor involved in disassembly of spliceosomes after the release of mature mRNA. The sequence is that of Probable pre-mRNA-splicing factor ATP-dependent RNA helicase prp43 (prp43) from Schizosaccharomyces pombe (strain 972 / ATCC 24843) (Fission yeast).